The primary structure comprises 150 residues: 6,7-dimethyl-8-ribityllumazine synthase (150 aa).

Residues Phe11, 43–45 (VFD), and 67–69 (AVI) each bind 5-amino-6-(D-ribitylamino)uracil. 72 to 73 (AT) is a (2S)-2-hydroxy-3-oxobutyl phosphate binding site. Catalysis depends on His75, which acts as the Proton donor. Leu100 contributes to the 5-amino-6-(D-ribitylamino)uracil binding site. Arg115 is a binding site for (2S)-2-hydroxy-3-oxobutyl phosphate.

It belongs to the DMRL synthase family.

The catalysed reaction is (2S)-2-hydroxy-3-oxobutyl phosphate + 5-amino-6-(D-ribitylamino)uracil = 6,7-dimethyl-8-(1-D-ribityl)lumazine + phosphate + 2 H2O + H(+). The protein operates within cofactor biosynthesis; riboflavin biosynthesis; riboflavin from 2-hydroxy-3-oxobutyl phosphate and 5-amino-6-(D-ribitylamino)uracil: step 1/2. In terms of biological role, catalyzes the formation of 6,7-dimethyl-8-ribityllumazine by condensation of 5-amino-6-(D-ribitylamino)uracil with 3,4-dihydroxy-2-butanone 4-phosphate. This is the penultimate step in the biosynthesis of riboflavin. This Pyrobaculum calidifontis (strain DSM 21063 / JCM 11548 / VA1) protein is 6,7-dimethyl-8-ribityllumazine synthase.